The sequence spans 248 residues: N-acylneuraminate-9-phosphatase (248 aa).

Position 12 (Asp12) interacts with Mg(2+). Residues Leu13, Asp14, Thr131, Asn132, and Lys164 each contribute to the phosphate site. Asp14 is a binding site for Mg(2+). A Mg(2+)-binding site is contributed by Asp189.

Belongs to the HAD-like hydrolase superfamily. NANP family. The cofactor is Mg(2+).

The catalysed reaction is N-acetylneuraminate 9-phosphate + H2O = N-acetylneuraminate + phosphate. The enzyme catalyses N-glycoloylneuraminate 9-phosphate + H2O = N-glycoloylneuraminate + phosphate. Its pathway is amino-sugar metabolism; N-acetylneuraminate biosynthesis. With respect to regulation, inhibited by calcium. Inhibited by vanadate, sodium orthovanadate and phosphonate. Functionally, catalyzes the dephosphorylation of N-acylneuraminate 9-phosphate (Neu5Ac-9-P) to N-acetylneuraminic acid (Neu5Ac or sialic acid). Can also use N-glycoloylneuraminate 9-phosphate as substrate. This is N-acylneuraminate-9-phosphatase from Rattus norvegicus (Rat).